A 62-amino-acid polypeptide reads, in one-letter code: Large ribosomal subunit protein bL32 (62 aa).

Residues Met1–Arg16 are compositionally biased toward basic residues. The segment at Met1–Glu62 is disordered. Residues Val53 to Glu62 are compositionally biased toward polar residues.

It belongs to the bacterial ribosomal protein bL32 family.

The sequence is that of Large ribosomal subunit protein bL32 from Alcanivorax borkumensis (strain ATCC 700651 / DSM 11573 / NCIMB 13689 / SK2).